We begin with the raw amino-acid sequence, 136 residues long: Peptide methionine sulfoxide reductase MsrB (136 aa).

The region spanning Asp9 to Lys136 is the MsrB domain. Residues Cys53, Cys56, Cys102, and Cys105 each contribute to the Zn(2+) site. Catalysis depends on Cys125, which acts as the Nucleophile.

The protein belongs to the MsrB Met sulfoxide reductase family. Requires Zn(2+) as cofactor.

It catalyses the reaction L-methionyl-[protein] + [thioredoxin]-disulfide + H2O = L-methionyl-(R)-S-oxide-[protein] + [thioredoxin]-dithiol. The protein is Peptide methionine sulfoxide reductase MsrB of Variovorax paradoxus (strain S110).